The following is an 895-amino-acid chain: Androgen receptor (895 aa).

The modulating stretch occupies residues 1-533 (MEVQLGLGRV…PIDYYFPPQK (533 aa)). Residues 1-562 (MEVQLGLGRV…GSCKVFFKRA (562 aa)) form an interaction with ZNF318 region. Disordered stretches follow at residues 33 to 150 (VIQN…LSLL) and 175 to 211 (QLLQ…YLGG). Low complexity-rich tracts occupy residues 44–81 (AASA…GSPQ) and 175–200 (QLLQ…ASGA). Ser-65 carries the phosphoserine; by CDK9 modification. Residue Ser-79 is modified to Phosphoserine. Over residues 201–211 (PTSSKDNYLGG) the composition is skewed to polar residues. At Tyr-208 the chain carries Phosphotyrosine; by CSK. Ser-241 carries the phosphoserine modification. A Phosphotyrosine; by CSK and TNK2 modification is found at Tyr-252. Residues Tyr-292, Tyr-331, Tyr-342, and Tyr-347 each carry the phosphotyrosine; by CSK modification. Tyr-348 is subject to Phosphotyrosine; by CSK and TNK2. Lys-371 is covalently cross-linked (Glycyl lysine isopeptide (Lys-Gly) (interchain with G-Cter in SUMO)). Position 378 is a phosphotyrosine; by CSK (Tyr-378). Residue Lys-496 forms a Glycyl lysine isopeptide (Lys-Gly) (interchain with G-Cter in SUMO) linkage. 2 positions are modified to phosphotyrosine; by CSK: Tyr-510 and Tyr-527. Positions 527–894 (YYFPPQKTCL…GKVKPIYFHT (368 aa)) are interaction with LPXN. A DNA-binding region (nuclear receptor) is located at residues 534-607 (TCLICGDEAS…AGMTLGARKL (74 aa)). 2 NR C4-type zinc fingers span residues 535 to 555 (CLIC…CGSC) and 571 to 595 (CASR…LRKC). The interval 547–637 (YGALTCGSCK…TEETAQKLTV (91 aa)) is interaction with HIPK3. An interaction with CCAR1 region spans residues 567–894 (QKYLCASRND…GKVKPIYFHT (328 aa)). Residues 600–894 (MTLGARKLKK…GKVKPIYFHT (295 aa)) are interaction with KAT7. At Ser-626 the chain carries Phosphoserine; by STK4/MST1. The region spanning 644-875 (ECQPIFLNVL…DFPEMMAEII (232 aa)) is the NR LBD domain. The 17beta-hydroxy-5alpha-androstan-3-one site is built by Asn-681 and Arg-728. Residues Lys-821 and Lys-823 each participate in a glycyl lysine isopeptide (Lys-Gly) (interchain with G-Cter in ubiquitin) cross-link. Thr-853 is a binding site for 17beta-hydroxy-5alpha-androstan-3-one. The residue at position 891 (Tyr-891) is a Phosphotyrosine; by CSK.

This sequence belongs to the nuclear hormone receptor family. NR3 subfamily. In terms of assembly, binds DNA as a homodimer. Part of a ternary complex containing AR, EFCAB6/DJBP and PARK7. Interacts with HIPK3 and NR0B2 in the presence of androgen. The ligand binding domain interacts with KAT7/HBO1 in the presence of dihydrotestosterone. Interacts with EFCAB6/DJBP, PQBP1, RANBP9, RBAK, SPDEF, SRA1, TGFB1I1 and RREB1. Interacts with ZMIZ1/ZIMP10 and ZMIZ2/ZMIP7 which both enhance its transactivation activity. Interacts with SLC30A9 and RAD54L2/ARIP4. Interacts with MACROD1 (via macro domain). Interacts via the ligand-binding domain with LXXLL and FXXLF motifs from NCOA1, NCOA2, NCOA3 and MAGEA11. Interacts (via nuclear receptor DNA binding domain and nuclear receptor ligand binding domain) with NCOA4. The AR N-terminal poly-Gln region binds Ran resulting in enhancement of AR-mediated transactivation. Ran-binding decreases as the poly-Gln length increases. Interacts with HIP1 (via coiled coil domain). Interacts (via ligand-binding domain) with TRIM68. Interacts with TNK2. Interacts with USP26. Interacts with RNF6. Interacts (regulated by RNF6 probably through polyubiquitination) with RNF14; regulates AR transcriptional activity. Interacts with PRMT2 and TRIM24. Interacts with RACK1. Interacts with RANBP10; this interaction enhances dihydrotestosterone-induced AR transcriptional activity. Interacts with PRPF6 in a hormone-independent way; this interaction enhances dihydrotestosterone-induced AR transcriptional activity. Interacts with STK4/MST1. Interacts with ZIPK/DAPK3. Interacts with LPXN. Interacts with MAK. Part of a complex containing AR, MAK and NCOA3. Interacts with CRY1. Interacts with CCAR1 and GATA2. Interacts with ZNF318. Interacts with BUD31. Interacts with ARID4A. Interacts with ARID4B. Interacts (via NR LBD domain) with ZBTB7A; the interaction is direct and androgen-dependent. Interacts with NCOR1. Interacts with NCOR2. Interacts with CRY2 in a ligand-dependent manner. Phosphorylated in prostate cancer cells in response to several growth factors including EGF. Phosphorylation is induced by c-Src kinase (CSK). Tyr-510 is one of the major phosphorylation sites and an increase in phosphorylation and Src kinase activity is associated with prostate cancer progression. Phosphorylation by TNK2 enhances the DNA-binding and transcriptional activity. Phosphorylation at Ser-65 by CDK9 regulates AR promoter selectivity and cell growth. Post-translationally, sumoylated on Lys-371 (major) and Lys-496. Ubiquitinated. Deubiquitinated by USP26. 'Lys-6' and 'Lys-27'-linked polyubiquitination by RNF6 modulates AR transcriptional activity and specificity. In terms of processing, palmitoylated by ZDHHC7 and ZDHHC21. Palmitoylation is required for plasma membrane targeting and for rapid intracellular signaling via ERK and AKT kinases and cAMP generation.

The protein resides in the nucleus. It is found in the cytoplasm. Its function is as follows. Steroid hormone receptors are ligand-activated transcription factors that regulate eukaryotic gene expression and affect cellular proliferation and differentiation in target tissues. Transcription factor activity is modulated by bound coactivator and corepressor proteins like ZBTB7A that recruits NCOR1 and NCOR2 to the androgen response elements/ARE on target genes, negatively regulating androgen receptor signaling and androgen-induced cell proliferation. Transcription activation is also down-regulated by NR0B2. Activated, but not phosphorylated, by HIPK3 and ZIPK/DAPK3. The protein is Androgen receptor (AR) of Macaca fascicularis (Crab-eating macaque).